Reading from the N-terminus, the 318-residue chain is NADH-ubiquinone oxidoreductase chain 1 (318 aa).

8 helical membrane-spanning segments follow: residues phenylalanine 2–leucine 22, methionine 70–proline 90, leucine 100–glycine 120, alanine 147–isoleucine 167, methionine 172–glutamate 192, leucine 222–phenylalanine 242, glutamate 253–isoleucine 273, and leucine 294–isoleucine 314.

The protein belongs to the complex I subunit 1 family. In terms of assembly, core subunit of respiratory chain NADH dehydrogenase (Complex I) which is composed of 45 different subunits.

Its subcellular location is the mitochondrion inner membrane. The catalysed reaction is a ubiquinone + NADH + 5 H(+)(in) = a ubiquinol + NAD(+) + 4 H(+)(out). Functionally, core subunit of the mitochondrial membrane respiratory chain NADH dehydrogenase (Complex I) which catalyzes electron transfer from NADH through the respiratory chain, using ubiquinone as an electron acceptor. Essential for the catalytic activity and assembly of complex I. This is NADH-ubiquinone oxidoreductase chain 1 (MT-ND1) from Bos indicus (Zebu).